A 433-amino-acid polypeptide reads, in one-letter code: Shikimate O-hydroxycinnamoyltransferase (433 aa).

Catalysis depends on His-153, which acts as the Proton acceptor. 4-coumaroyl-CoA-binding positions include 252–255, 284–290, and 370–373; these read SSYE, DGRSRLR, and SWVR. Asp-380 (proton acceptor) is an active-site residue.

Belongs to the plant acyltransferase family.

The enzyme catalyses shikimate + 4-coumaroyl-CoA = trans-4-coumaroylshikimate + CoA. Its function is as follows. Acyltransferase involved in the biosynthesis of lignin. Accepts caffeoyl-CoA and p-coumaroyl-CoA as substrates and transfers the acyl group on both shikimate and quinate acceptors. The chain is Shikimate O-hydroxycinnamoyltransferase (HST) from Arabidopsis thaliana (Mouse-ear cress).